The chain runs to 388 residues: Leucine aminopeptidase 1 (388 aa).

The signal sequence occupies residues 1–19 (MKVLTAIALSAIAFTGAVA). The propeptide occupies 20 to 88 (AVITQEAFLN…YPTLHSASYV (69 aa)). N-linked (GlcNAc...) asparagine glycans are attached at residues Asn-106 and Asn-180. The Zn(2+) site is built by His-188 and Asp-207. Asn-232 is a glycosylation site (N-linked (GlcNAc...) asparagine). 2 residues coordinate Zn(2+): Glu-246 and Asp-273. Cys-322 and Cys-326 are disulfide-bonded. Position 355 (His-355) interacts with Zn(2+).

Belongs to the peptidase M28 family. M28E subfamily. In terms of assembly, monomer. The cofactor is Zn(2+).

The protein resides in the secreted. Extracellular aminopeptidase that allows assimilation of proteinaceous substrates and which contributes to pathogenicity. This Aspergillus fumigatus (strain CBS 144.89 / FGSC A1163 / CEA10) (Neosartorya fumigata) protein is Leucine aminopeptidase 1 (lap1).